The primary structure comprises 812 residues: Eukaryotic translation initiation factor 3 subunit C (812 aa).

The tract at residues 1 to 110 (MSRFFSSNYE…EESDEEDGKK (110 aa)) is disordered. 2 stretches are compositionally biased toward acidic residues: residues 18-30 (SEED…EEDL) and 38-64 (SELD…DSDD). S98, S99, and S103 each carry phosphoserine. In terms of domain architecture, PCI spans 608 to 783 (YHQHINLDLI…TIFVVEKGDE (176 aa)).

It belongs to the eIF-3 subunit C family. As to quaternary structure, the eukaryotic translation initiation factor 3 (eIF-3) core complex is composed of TIF32, PRT1, NIP1, TIF34 and TIF35. A subcomplex of TIF32, NIP1 and PRT1 mediates the interaction with eIF-1, TIF5/eIF-5 and HCR1. The factors eIF-1, eIF-2, eIF-3, TIF5/eIF-5 and methionyl-tRNAi form a multifactor complex (MFC) that may bind to the 40S ribosome. TIF32, NIP1 and TIF5/eIF-5 comprise a minimal 40S-ribosome-binding unit. NIP1 interacts with TIF5/eIF-5 and SUI1.

The protein localises to the cytoplasm. In terms of biological role, component of the eukaryotic translation initiation factor 3 (eIF-3) complex, which is involved in protein synthesis of a specialized repertoire of mRNAs and, together with other initiation factors, stimulates binding of mRNA and methionyl-tRNAi to the 40S ribosome. The eIF-3 complex specifically targets and initiates translation of a subset of mRNAs involved in cell proliferation. The sequence is that of Eukaryotic translation initiation factor 3 subunit C from Saccharomyces cerevisiae (strain ATCC 204508 / S288c) (Baker's yeast).